The chain runs to 321 residues: Endochitinase 33 (321 aa).

A signal peptide spans 1–19; sequence MPSLTALASLLALVPSALA. One can recognise a GH18 domain in the interval 27-321; sequence QNIAVYWGQN…FETQVVNALR (295 aa). Glu167 acts as the Proton donor in catalysis.

The protein belongs to the glycosyl hydrolase 18 family. Chitinase class III subfamily. As to quaternary structure, monomer.

Its subcellular location is the secreted. The enzyme catalyses Random endo-hydrolysis of N-acetyl-beta-D-glucosaminide (1-&gt;4)-beta-linkages in chitin and chitodextrins.. In terms of biological role, secreted chitinase involved in the degradation of chitin, a component of the cell walls of fungi and exoskeletal elements of some animals (including worms and arthropods). Plays a morphogenetic role during apical growth, cell division and differentiation (cell wall morphogenesis). May be involved in the degradation and further assimilation of phytopathogenic fungi, namely mycoparasitism, the major mechanism accounting for the antagonistic activity against phytopathogenic fungi displayed by Trichoderma. The protein is Endochitinase 33 (chit33) of Trichoderma harzianum (Hypocrea lixii).